A 351-amino-acid chain; its full sequence is Holliday junction branch migration complex subunit RuvB (351 aa).

The tract at residues 1 to 186 (MDEKIETRLI…FGIVQRLEFY (186 aa)) is large ATPase domain (RuvB-L). ATP is bound by residues I25, R26, G67, K70, T71, T72, 133-135 (EDF), R176, Y186, and R223. T71 is a Mg(2+) binding site. The interval 187 to 257 (RIPDLIHIVK…IAKEALDLLN (71 aa)) is small ATPAse domain (RuvB-S). A head domain (RuvB-H) region spans residues 260 to 351 (IRGLDVMDRK…ENFDLLGKVE (92 aa)). DNA contacts are provided by R296, R315, and R320.

Belongs to the RuvB family. Homohexamer. Forms an RuvA(8)-RuvB(12)-Holliday junction (HJ) complex. HJ DNA is sandwiched between 2 RuvA tetramers; dsDNA enters through RuvA and exits via RuvB. An RuvB hexamer assembles on each DNA strand where it exits the tetramer. Each RuvB hexamer is contacted by two RuvA subunits (via domain III) on 2 adjacent RuvB subunits; this complex drives branch migration. In the full resolvosome a probable DNA-RuvA(4)-RuvB(12)-RuvC(2) complex forms which resolves the HJ.

The protein resides in the cytoplasm. The catalysed reaction is ATP + H2O = ADP + phosphate + H(+). Its function is as follows. The RuvA-RuvB-RuvC complex processes Holliday junction (HJ) DNA during genetic recombination and DNA repair, while the RuvA-RuvB complex plays an important role in the rescue of blocked DNA replication forks via replication fork reversal (RFR). RuvA specifically binds to HJ cruciform DNA, conferring on it an open structure. The RuvB hexamer acts as an ATP-dependent pump, pulling dsDNA into and through the RuvAB complex. RuvB forms 2 homohexamers on either side of HJ DNA bound by 1 or 2 RuvA tetramers; 4 subunits per hexamer contact DNA at a time. Coordinated motions by a converter formed by DNA-disengaged RuvB subunits stimulates ATP hydrolysis and nucleotide exchange. Immobilization of the converter enables RuvB to convert the ATP-contained energy into a lever motion, pulling 2 nucleotides of DNA out of the RuvA tetramer per ATP hydrolyzed, thus driving DNA branch migration. The RuvB motors rotate together with the DNA substrate, which together with the progressing nucleotide cycle form the mechanistic basis for DNA recombination by continuous HJ branch migration. Branch migration allows RuvC to scan DNA until it finds its consensus sequence, where it cleaves and resolves cruciform DNA. The sequence is that of Holliday junction branch migration complex subunit RuvB from Coxiella burnetii (strain RSA 331 / Henzerling II).